The sequence spans 520 residues: Polycomb protein PHO (520 aa).

4 consecutive C2H2-type zinc fingers follow at residues 357-381 (IACPHKGCNKHFRDSSAMRKHLHTH), 386-408 (HVCAECGKAFVESSKLKRHQLVH), 414-438 (FQCTFEGCGKRFSLDFNLRTHVRIH), and 444-468 (FVCPFDACNKKFAQSTNLKSHILTH). Positions 475-497 (TSISGKSGCSNAESNSQSEDTSA) are disordered.

Component of the Esc/E(z) complex, composed of Esc, E(z), Su(z)12, HDAC1/Rpd3 and Caf1-55. This complex is distinct from the PRC1 complex, which contains many other PcG proteins like Pc, Ph, Psc, Su(z)2. The two complexes however cooperate and interact together during the first 3 hours of development to establish PcG silencing. Component of the chromatin remodeling Ino80 complex. Interacts with Sfmbt to form a pho-repressive complex (PhoRC).

Its subcellular location is the nucleus. In terms of biological role, polycomb group (PcG) protein that binds to the 5'-CNGCCATNNNNG-3' sequence found in the regulatory regions of many genes. PcG proteins act by forming multiprotein complexes, which are required to maintain the transcriptionally repressive state of homeotic genes throughout development. PcG proteins are not required to initiate repression, but to maintain it during later stages of development. They probably act via the methylation of histones, rendering chromatin heritably changed in its expressibility. Probably targets the Esc/E(z) complex to DNA. Necessary but not sufficient to recruit a functional PcG repressive complex that represses target genes, suggesting that the recruitment of the distinct PRC1 complex is also required to allow a subsequent repression. Proposed core component of the chromatin remodeling Ino80 complex which is involved in transcriptional regulation, DNA replication and probably DNA repair. This Drosophila melanogaster (Fruit fly) protein is Polycomb protein PHO (pho).